Consider the following 332-residue polypeptide: tRNA-dihydrouridine synthase B (332 aa).

FMN is bound by residues 19–21 (PMA) and Gln73. The active-site Proton donor is the Cys103. FMN-binding positions include Lys142, 203-205 (NGD), and 227-228 (GR).

It belongs to the Dus family. DusB subfamily. FMN is required as a cofactor.

It catalyses the reaction a 5,6-dihydrouridine in tRNA + NAD(+) = a uridine in tRNA + NADH + H(+). The enzyme catalyses a 5,6-dihydrouridine in tRNA + NADP(+) = a uridine in tRNA + NADPH + H(+). Functionally, catalyzes the synthesis of 5,6-dihydrouridine (D), a modified base found in the D-loop of most tRNAs, via the reduction of the C5-C6 double bond in target uridines. The protein is tRNA-dihydrouridine synthase B of Pseudomonas aeruginosa (strain ATCC 15692 / DSM 22644 / CIP 104116 / JCM 14847 / LMG 12228 / 1C / PRS 101 / PAO1).